Here is a 4293-residue protein sequence, read N- to C-terminus: Polycystin-1 (4293 aa).

Positions 1-23 (MPLGAPALLALALGLGLWLGALA) are cleaved as a signal peptide. An LRRNT domain is found at 24–67 (GDPGRGCGPCPLPCFCGPAPDAACRVNCSGRWLQTLGPSLRIPA). Residues 24 to 3066 (GDPGRGCGPC…IFPEPSASIN (3043 aa)) are Extracellular-facing. 2 N-linked (GlcNAc...) asparagine glycosylation sites follow: N50 and N89. 2 LRR repeats span residues 68-91 (DATA…VNLS) and 92-113 (ALVE…VFAN). Residues N116 and N121 are each glycosylated (N-linked (GlcNAc...) asparagine). The LRRCT domain occupies 125–178 (NPFECNCGLAWLPRWAKEHQVHVVQSEATTCRGPIPLAGQPLLSIPLLDNACGE). The WSC domain maps to 177–271 (GEEYVACLPD…PTLLQHTFPA (95 aa)). Residues N187 and N239 are each glycosylated (N-linked (GlcNAc...) asparagine). The PKD 1 domain occupies 272-359 (SPGATLVGPH…VQVEATPTVL (88 aa)). N370 carries N-linked (GlcNAc...) asparagine glycosylation. Positions 415–530 (GNGHCYRLVA…CSAPHSYVCE (116 aa)) constitute a C-type lectin domain. 2 disulfide bridges follow: C436–C529 and C507–C521. A disordered region spans residues 613 to 632 (GGAAAVPEGSSEPDNRTEPA). N-linked (GlcNAc...) asparagine glycosylation is present at N627. An LDL-receptor class A; atypical domain is found at 633-666 (PKCVPEELWCPGANVCIPFDASCNSHVCINGSVS). 2 cysteine pairs are disulfide-bonded: C635/C648 and C642/C660. Residues N662, N740, N804, N835, N848, N859, N884, N915, N998, N1004, N1028, N1084, N1096, N1107, N1172, N1188, N1234, N1263, N1330, N1342, N1376, N1444, N1449, N1468, N1535, N1548, N1557, N1643, N1657, N1706, N1730, N1788, N1831, N1863, and N1876 are each glycosylated (N-linked (GlcNAc...) asparagine). PKD domains follow at residues 849–922 (ATAT…RVTA), 929–1014 (LRAV…NKMH), 1017–1123 (WVSA…LPNV), 1121–1209 (PNVA…LHGL), 1207–1292 (HGLT…EVLH), 1288–1377 (LEVL…IRNI), 1376–1463 (NITL…VLVT), 1462–1545 (VTGI…VRGL), 1544–1629 (GLTI…IEGL), 1630–1718 (QVAG…VESL), 1716–1802 (ESLI…VGGL), 1804–1886 (IRTS…IVNL), 1885–1970 (NLML…VVGL), 1972–2053 (VPNC…MVEV), and 2056–2144 (IIQY…ACRE). N-linked (GlcNAc...) asparagine glycosylation is found at N1987, N2046, N2070, N2121, N2244, N2349, N2391, N2408, N2414, N2563, N2640, N2713, N2749, N2813, N2836, N2873, N2948, and N2986. The 687-residue stretch at 2142–2828 (CREPEVEVAL…QLIFLVDSNP (687 aa)) folds into the REJ domain. Residues 2857-3055 (PIEQLAAERA…SLFVPPSHVQ (199 aa)) enclose the GAIN-B domain. An intrachain disulfide couples C3007 to C3035. The GPS stretch occupies residues 3007-3055 (CQYFSEEMMMWRTEGIVPLEETSPSQAVCLTRHLTAFGASLFVPPSHVQ). The chain crosses the membrane as a helical span at residues 3067 to 3087 (YIVLLTCVICLVTYVVMAMIL). At 3088 to 3269 (RKLDQLDVSR…DRPPRSRFTR (182 aa)) the chain is on the cytoplasmic side. Residues 3110-3225 (FKYEILVKTG…EANGGLVEKE (116 aa)) enclose the PLAT domain. The helical transmembrane segment at 3270–3290 (VQRVTCCVLLLCLFLAANAVW) threads the bilayer. The Extracellular segment spans residues 3291 to 3315 (YGVVRDTTYSMGPVSSLISPGVDTV). The helical transmembrane segment at 3316–3336 (AIGLVSSVVVYPVYLAVLFLF) threads the bilayer. The Cytoplasmic segment spans residues 3337–3549 (RMSRSKVSGD…LPAWCAPLAH (213 aa)). A helical transmembrane segment spans residues 3550-3570 (GLSLLLVAVAVAVSGWIGASF). The Extracellular segment spans residues 3571 to 3572 (PP). A helical membrane pass occupies residues 3573–3593 (SVSVMWLLSSSSSFLASFLGW). At 3594–3655 (EPLKVLLEAL…LAKEEARKVK (62 aa)) the chain is on the cytoplasmic side. The helical transmembrane segment at 3656–3676 (RLHDMLKRLLVYMLFLLVTLL) threads the bilayer. Residues 3677-3891 (ANYGDASCHG…RLSTGLSLPL (215 aa)) lie on the Extracellular side of the membrane. N-linked (GlcNAc...) asparagine glycosylation is found at N3728 and N3780. A helical membrane pass occupies residues 3892 to 3912 (LTSVCLLLFALYFSMAEVQTW). Over 3913 to 3925 (RKDGCACTARPDT) the chain is Cytoplasmic. A helical transmembrane segment spans residues 3926 to 3946 (WARCLLVILTAATGLVRLAQL). The Extracellular segment spans residues 3947–3974 (GIADRQWTHFVQDHPRHFTSFDQVAQLG). A helical transmembrane segment spans residues 3975 to 3995 (SVARGLAASLLFLLLVKAAQQ). Residues 3996–4017 (LRFVRQWSVFGKTLCRALPELM) lie on the Cytoplasmic side of the membrane. A helical transmembrane segment spans residues 4018-4038 (GATLGLVLLGVAYAQMAILLI). Topologically, residues 4039–4080 (SSGADTLYNMARAFLVLCPGARVPTLCPSESWYLSPLLCVGL) are extracellular. The helical transmembrane segment at 4081–4100 (WALRVWGALRLGAILLRWRY) threads the bilayer. The Cytoplasmic segment spans residues 4101–4293 (HALRGELYRP…PNNKVHPSST (193 aa)). Disordered regions lie at residues 4150 to 4197 (PLPS…STLK) and 4235 to 4293 (SLQG…PSST). Over residues 4153–4172 (SRSSRGSKSSPVVLPPSSGS) the composition is skewed to low complexity. Position 4156 is a phosphoserine; by PRKX; in vitro (S4156). Over residues 4173-4195 (EASHPSTSSSQPDGPSASLSRST) the composition is skewed to polar residues. Residues 4210–4241 (ESLLVQFDRLNQATEDVYQLEQQLQSLQGHGH) are a coiled coil. Low complexity predominate over residues 4238–4256 (GHGHNGPPSSPSPGCFPGS). Residues 4265–4276 (SRASQGLDQTVG) are compositionally biased toward polar residues.

This sequence belongs to the polycystin family. As to quaternary structure, component of the heterotetrameric polycystin channel complex with PKD2; the tetramer contains one PKD1 chain and three PKD2 chains. Interacts with PKD2; the interaction is required for ciliary localization. Interacts with PKD2L1. Interacts with PRKX; involved in differentiation and controlled morphogenesis of the kidney. Interacts (via extracellular domain) with WNT3A, WNT4 and WNT9B. Interacts with WNT5A, DVL1 and DVL2. Interacts with NPHP1 (via SH3 domain). Interacts with BBS1, BBS4, BBS5 and TTC8. Interacts with RGS7. Interacts (via C-terminal domain) with RABEP1; the interaction connects PKD1:PKD2 to GGA1 and ARL3 that mediate the ciliary targeting. Interacts (via the PKD repeats in the N-terminal extracellular region) with EPCIP; the interaction is not dependent on N-glycosylation of either protein. N-glycosylated. Post-translationally, after synthesis, undergoes autoproteolytic cleavage between Leu-3040 and Thr-3041 in the GPS region of the GAIN-B domain. Cleavage at the GPS region occurs through a cis-autoproteolytic mechanism involving an ester-intermediate via N-O acyl rearrangement. This process takes place in the early secretory pathway, depends on initial N-glycosylation, and requires the REJ domain. PKD1 is ubiquitously and incompletely cleaved in wild-type mice, so that uncleaved and cleaved PKD1 molecules coexist. The differential patterns of cleavage during embryonic development, as well as in adult mice, suggest different functions of uncleaved and cleaved molecules.

The protein localises to the cell membrane. It is found in the cell projection. The protein resides in the cilium. It localises to the endoplasmic reticulum. Its subcellular location is the golgi apparatus. The protein localises to the vesicle. It is found in the secreted. The protein resides in the extracellular exosome. Component of a heteromeric calcium-permeable ion channel formed by PKD1 and PKD2 that is activated by interaction between PKD1 and a Wnt family member, such as WNT3A and WNT9B. Both PKD1 and PKD2 are required for channel activity. Involved in renal tubulogenesis. Involved in fluid-flow mechanosensation by the primary cilium in renal epithelium. Acts as a regulator of cilium length, together with PKD2. The dynamic control of cilium length is essential in the regulation of mechanotransductive signaling. The cilium length response creates a negative feedback loop whereby fluid shear-mediated deflection of the primary cilium, which decreases intracellular cAMP, leads to cilium shortening and thus decreases flow-induced signaling. May be an ion-channel regulator. Involved in adhesive protein-protein and protein-carbohydrate interactions. Likely to be involved with polycystin-1-interacting protein 1 in the detection, sequestration and exocytosis of senescent mitochondria. This is Polycystin-1 from Mus musculus (Mouse).